Reading from the N-terminus, the 426-residue chain is Chaperone SurA (426 aa).

The first 19 residues, 1–19 (MGRVLVTIFVLFWPIGSFA), serve as a signal peptide directing secretion. PpiC domains are found at residues 169–270 (DAQY…KLLD) and 280–379 (VTQT…QVLD).

Its subcellular location is the periplasm. It catalyses the reaction [protein]-peptidylproline (omega=180) = [protein]-peptidylproline (omega=0). Functionally, chaperone involved in the correct folding and assembly of outer membrane proteins. Recognizes specific patterns of aromatic residues and the orientation of their side chains, which are found more frequently in integral outer membrane proteins. May act in both early periplasmic and late outer membrane-associated steps of protein maturation. The chain is Chaperone SurA from Nitrosococcus oceani (strain ATCC 19707 / BCRC 17464 / JCM 30415 / NCIMB 11848 / C-107).